A 140-amino-acid chain; its full sequence is 5-NmdU N-acetyltransferase (140 aa).

Residues 2–140 form the N-acetyltransferase domain; that stretch reads IVVRKALPEE…GEGLALFKEW (139 aa).

Belongs to the acetyltransferase family.

It carries out the reaction 5-aminomethyl-dUMP in DNA + acetyl-CoA = 5-acetylaminomethyl-dUMP in DNA + CoA + H(+). Functionally, acetylates 5-aminomethyl-2'-deoxyuridine (5-NmdU) to produce 5-acetylaminomethyl-2'-deoxyuridine (5-AcNmdU) on DNA as a step in the pathway leading to thymidine hypermodifications in the viral genome. As a final result of the pathway of hypermodification, 5-acetylaminomethyl-2'-deoxyuridine (5-AcNmdU) substitutes for a subset of thymidines in the viral DNA. These modifications probably prevent degradation of viral genome by the host restriction-modification antiviral defense system. The protein is 5-NmdU N-acetyltransferase of Pseudomonas aeruginosa.